The primary structure comprises 232 residues: Large ribosomal subunit protein uL1 (232 aa).

Belongs to the universal ribosomal protein uL1 family. As to quaternary structure, part of the 50S ribosomal subunit.

Functionally, binds directly to 23S rRNA. The L1 stalk is quite mobile in the ribosome, and is involved in E site tRNA release. Its function is as follows. Protein L1 is also a translational repressor protein, it controls the translation of the L11 operon by binding to its mRNA. This Burkholderia multivorans (strain ATCC 17616 / 249) protein is Large ribosomal subunit protein uL1.